We begin with the raw amino-acid sequence, 163 residues long: ATP synthase subunit b, sodium ion specific (163 aa).

The chain crosses the membrane as a helical span at residues 9-29 (VSIDINMFWQIINFLILMFFF).

Belongs to the ATPase B chain family. As to quaternary structure, F-type ATPases have 2 components, F(1) - the catalytic core - and F(0) - the membrane proton channel. F(1) has five subunits: alpha(3), beta(3), gamma(1), delta(1), epsilon(1). F(0) has three main subunits: a(1), b(2) and c(10-14). The alpha and beta chains form an alternating ring which encloses part of the gamma chain. F(1) is attached to F(0) by a central stalk formed by the gamma and epsilon chains, while a peripheral stalk is formed by the delta and b chains.

The protein localises to the cell inner membrane. In terms of biological role, f(1)F(0) ATP synthase produces ATP from ADP in the presence of a proton or sodium gradient. F-type ATPases consist of two structural domains, F(1) containing the extramembraneous catalytic core and F(0) containing the membrane proton channel, linked together by a central stalk and a peripheral stalk. During catalysis, ATP synthesis in the catalytic domain of F(1) is coupled via a rotary mechanism of the central stalk subunits to proton translocation. Functionally, component of the F(0) channel, it forms part of the peripheral stalk, linking F(1) to F(0). The protein is ATP synthase subunit b, sodium ion specific (atpF) of Ilyobacter tartaricus.